We begin with the raw amino-acid sequence, 470 residues long: MLNMTEEHDKALEAPCSPAGTTSSMSHVDSDSDSPLSPAGSEGLGCAPAPAPRPPGAAPLGAKVDAAEVDERFPACIRDAVSQVLKGYDWSLVPMPVRGNGSLKAKPHVKRPMNAFMVWAQAARRKLADQYPHLHNAELSKTLGKLWRLLSENEKRPFVEEAERLRVQHKKDHPDYKYQPRRRKSVKAGQSDSDSGAELSHHAGTQIYKADSGLGGMADGHHHGEHAGQPHGPPTPPTTPKTDLHHGSKQELKHEGRRLVESGRQNIDFSNVDISELSSEVINNMETFDVHEFDQYLPLNGHTAMPADHGPGAGFYSTSYSHSAAGAGGAGQVWTHKSPASASPSSADSGQQRPHIKTEQLSPSHYSDQSHGSPAHSDYGSYSTQACATTASTATAAASFSSSQCDYTDLQSSNYYNPYPGYPSSIYQYPYFHSSRRPYATPILNGLSIPPAHSPTANWDQPVYTTLTRP.

Over residues 1–12 (MLNMTEEHDKAL) the composition is skewed to basic and acidic residues. Positions 1–60 (MLNMTEEHDKALEAPCSPAGTTSSMSHVDSDSDSPLSPAGSEGLGCAPAPAPRPPGAAPL) are disordered. The dimerization (DIM) stretch occupies residues 67–107 (AEVDERFPACIRDAVSQVLKGYDWSLVPMPVRGNGSLKAKP). Positions 109–177 (VKRPMNAFMV…QHKKDHPDYK (69 aa)) form a DNA-binding region, HMG box. Basic and acidic residues-rich tracts occupy residues 163–178 (ERLR…DYKY), 219–228 (DGHHHGEHAG), and 242–257 (TDLH…HEGR). Disordered stretches follow at residues 163 to 257 (ERLR…HEGR) and 327 to 381 (AGGA…DYGS). Residues 233-308 (PPTPPTTPKT…LNGHTAMPAD (76 aa)) form a transactivation domain (TAM) region. Over residues 338-349 (SPASASPSSADS) the composition is skewed to low complexity. Positions 353–470 (RPHIKTEQLS…QPVYTTLTRP (118 aa)) are transactivation domain (TAC). Positions 359–372 (EQLSPSHYSDQSHG) are enriched in polar residues. The 9aaTAD signature appears at 424 to 432 (SSIYQYPYF).

As to expression, widely expressed in the embryo.

The protein localises to the nucleus. Its function is as follows. Transcription factor that may play a role in central nervous system, limb and facial development. May be involved in male sex determination. Binds the consensus motif 5'-[AT][AT]CAA[AT]G-3'. The chain is Transcription factor SOX-8 (SOX8) from Gallus gallus (Chicken).